Consider the following 1325-residue polypeptide: ATP-binding cassette sub-family C member 4 (1325 aa).

6 consecutive transmembrane segments (helical) span residues 93–113 (LILG…PLFL), 136–156 (GYAA…HLYF), 205–225 (FDQV…AIAV), 227–247 (VLLW…LVIL), 322–342 (ASFF…YVLL), and 351–371 (VFVA…FFPS). Positions 93-377 (LILGIFTLIE…FFPSAIERGS (285 aa)) constitute an ABC transmembrane type-1 1 domain. One can recognise an ABC transporter 1 domain in the interval 410 to 633 (VHVQDFTAFW…GVDFGSLLKK (224 aa)). 445–452 (GPVGAGKS) is an ATP binding site. Thr646 and Thr648 each carry phosphothreonine. The segment covering 657-667 (ASIWSQQSSRP) has biased composition (polar residues). A disordered region spans residues 657–690 (ASIWSQQSSRPSLKDGAPEGQDAENTQAVQPEES). A phosphoserine mark is found at Ser664 and Ser668. 5 helical membrane passes run 710 to 730 (SWFF…FYVL), 761 to 781 (LSWY…FGIA), 849 to 869 (LVVS…IPLV), 954 to 974 (AICA…AKTL), and 977 to 997 (GQVG…QWSV). One can recognise an ABC transmembrane type-1 2 domain in the interval 714 to 1005 (IIFLVLLNMV…SVRQSAEVEN (292 aa)). The region spanning 1041 to 1274 (IVFDNVNFTY…PESLFYKMVQ (234 aa)) is the ABC transporter 2 domain. 1075–1082 (GRTGAGKS) is an ATP binding site. The PDZ-binding signature appears at 1322–1325 (ETAL).

In terms of assembly, interacts (via PDZ-binding motif) with SNX27 (via PDZ domain); this interaction accelerates MRP4 internalization. The cofactor is Mg(2+). N-glycosylated; leading to substrate-selective effects on its transport activity.

Its subcellular location is the basolateral cell membrane. The protein resides in the apical cell membrane. The enzyme catalyses ATP + H2O + xenobioticSide 1 = ADP + phosphate + xenobioticSide 2.. It carries out the reaction an S-substituted glutathione(in) + ATP + H2O = an S-substituted glutathione(out) + ADP + phosphate + H(+). It catalyses the reaction 17beta-estradiol 17-O-(beta-D-glucuronate)(in) + ATP + H2O = 17beta-estradiol 17-O-(beta-D-glucuronate)(out) + ADP + phosphate + H(+). The catalysed reaction is dehydroepiandrosterone 3-sulfate(in) + ATP + H2O = dehydroepiandrosterone 3-sulfate(out) + ADP + phosphate + H(+). The enzyme catalyses leukotriene C4(in) + ATP + H2O = leukotriene C4(out) + ADP + phosphate + H(+). It carries out the reaction leukotriene B4(in) + ATP + H2O = leukotriene B4(out) + ADP + phosphate + H(+). It catalyses the reaction urate(in) + ATP + H2O = urate(out) + ADP + phosphate + H(+). The catalysed reaction is 3',5'-cyclic GMP(in) + ATP + H2O = 3',5'-cyclic GMP(out) + ADP + phosphate + H(+). The enzyme catalyses 3',5'-cyclic AMP(in) + ATP + H2O = 3',5'-cyclic AMP(out) + ADP + phosphate + H(+). It carries out the reaction prostaglandin E2(in) + ATP + H2O = prostaglandin E2(out) + ADP + phosphate + H(+). It catalyses the reaction prostaglandin E1(in) + ATP + H2O = prostaglandin E1(out) + ADP + phosphate + H(+). The catalysed reaction is glycodeoxycholate(in) + glutathione(in) + ATP + H2O = glycodeoxycholate(out) + glutathione(out) + ADP + phosphate + H(+). The enzyme catalyses cholate(in) + glutathione(in) + ATP + H2O = cholate(out) + glutathione(out) + ADP + phosphate + H(+). It carries out the reaction glycocholate(in) + glutathione(in) + ATP + H2O = glycocholate(out) + glutathione(out) + ADP + phosphate + H(+). It catalyses the reaction taurocholate(in) + glutathione(in) + ATP + H2O = taurocholate(out) + glutathione(out) + ADP + phosphate + H(+). The catalysed reaction is glycochenodeoxycholate(in) + glutathione(in) + ATP + H2O = glycochenodeoxycholate(out) + glutathione(out) + ADP + phosphate + H(+). The enzyme catalyses taurochenodeoxycholate(in) + glutathione(in) + ATP + H2O = taurochenodeoxycholate(out) + glutathione(out) + ADP + phosphate + H(+). It carries out the reaction glycoursodeoxycholate(in) + glutathione(in) + ATP + H2O = glycoursodeoxycholate(out) + glutathione(out) + ADP + phosphate + H(+). It catalyses the reaction tauroursodeoxycholate(in) + glutathione(in) + ATP + H2O = tauroursodeoxycholate(out) + glutathione(out) + ADP + phosphate + H(+). ATP-dependent transporter of the ATP-binding cassette (ABC) family that actively extrudes physiological compounds and xenobiotics from cells. Transports a range of endogenous molecules that have a key role in cellular communication and signaling, including cyclic nucleotides such as cyclic AMP (cAMP) and cyclic GMP (cGMP), bile acids, steroid conjugates, urate, and prostaglandins. Also mediates the ATP-dependent efflux of glutathione conjugates such as leukotriene C4 (LTC4) and leukotriene B4 (LTB4). The presence of GSH is necessary for the ATP-dependent transport of LTB4, whereas GSH is not required for the transport of LTC4. Mediates the cotransport of bile acids with reduced glutathione (GSH). Transports a wide range of drugs and their metabolites, including anticancer, antiviral and antibiotics molecules. Confers resistance to anticancer agents. The protein is ATP-binding cassette sub-family C member 4 of Mus musculus (Mouse).